A 245-amino-acid chain; its full sequence is UDP-2,3-diacylglucosamine hydrolase (245 aa).

The Mn(2+) site is built by D8, H10, D41, N79, and H114. N79–R80 is a substrate binding site. Substrate contacts are provided by D122, S160, K164, K167, and H195. Residues H195 and H197 each contribute to the Mn(2+) site.

This sequence belongs to the LpxH family. It depends on Mn(2+) as a cofactor.

The protein resides in the cell inner membrane. The catalysed reaction is UDP-2-N,3-O-bis[(3R)-3-hydroxytetradecanoyl]-alpha-D-glucosamine + H2O = 2-N,3-O-bis[(3R)-3-hydroxytetradecanoyl]-alpha-D-glucosaminyl 1-phosphate + UMP + 2 H(+). Its pathway is glycolipid biosynthesis; lipid IV(A) biosynthesis; lipid IV(A) from (3R)-3-hydroxytetradecanoyl-[acyl-carrier-protein] and UDP-N-acetyl-alpha-D-glucosamine: step 4/6. Hydrolyzes the pyrophosphate bond of UDP-2,3-diacylglucosamine to yield 2,3-diacylglucosamine 1-phosphate (lipid X) and UMP by catalyzing the attack of water at the alpha-P atom. Involved in the biosynthesis of lipid A, a phosphorylated glycolipid that anchors the lipopolysaccharide to the outer membrane of the cell. In Aromatoleum aromaticum (strain DSM 19018 / LMG 30748 / EbN1) (Azoarcus sp. (strain EbN1)), this protein is UDP-2,3-diacylglucosamine hydrolase.